A 216-amino-acid chain; its full sequence is Adenylate kinase (216 aa).

Residue 10-15 (GAGKGT) participates in ATP binding. Positions 30-59 (STGDIFRKNISNKTPLGMEAKSYMDKGQLV) are NMP. AMP is bound by residues Thr-31, Arg-36, 57–59 (QLV), 85–88 (GFPR), and Gln-92. The interval 126–163 (GRRVCGECGASYHIKFITPKTEGVCDLCGGKLVQRKDD) is LID. Arg-127 lines the ATP pocket. The Zn(2+) site is built by Cys-130 and Cys-133. ATP is bound at residue 136 to 137 (SY). Zn(2+)-binding residues include Cys-150 and Cys-153. Residues Arg-160 and Arg-171 each coordinate AMP. Lys-199 is an ATP binding site.

This sequence belongs to the adenylate kinase family. As to quaternary structure, monomer.

Its subcellular location is the cytoplasm. It catalyses the reaction AMP + ATP = 2 ADP. It participates in purine metabolism; AMP biosynthesis via salvage pathway; AMP from ADP: step 1/1. In terms of biological role, catalyzes the reversible transfer of the terminal phosphate group between ATP and AMP. Plays an important role in cellular energy homeostasis and in adenine nucleotide metabolism. In Clostridium tetani (strain Massachusetts / E88), this protein is Adenylate kinase.